Here is a 161-residue protein sequence, read N- to C-terminus: Heme transporter hrg-6 (161 aa).

A run of 4 helical transmembrane segments spans residues 13–33 (IAYTICGIIIGLFWACVYIFA), 38–58 (VALAACLTATAFAFETFYFYL), 75–95 (VLFWINLIVGFLSIGGMITAI), and 115–135 (WWSTATWFLVMLKWTWQNAFI).

The protein belongs to the HRG family.

The protein resides in the membrane. Heme transporter. The protein is Heme transporter hrg-6 (hrg-6) of Caenorhabditis elegans.